Consider the following 353-residue polypeptide: MNTIKIKLNLIDYDSIVNIEFPCLLSEIEIELLSQLLKGYSVNEISKRRNRSIKTVSCQKMKLYKKLNVKSDLTLWRDVFLRFKAYLQPKNIICDNFNSSVLPVVSSKGESMAHYNIYYQPIYNAKNGNIAGCDVTIALKNSDGSAFALDSDRINYNPNDNKVSYLFGHINKLFSPIKNNLPHGFFITININPEDILTCDIERECLHFIKVFGTERIRLVLQFSTKEELYIIRRYQSSLRRIRNNNVYLSLNDFGMGYAELSHLQNIPFSYVNLHKTMFHDIESNSLTDIIATTIIDLSKQLHIDVIADGIETKKQAGYMIERGVKYLKGIALSSPLPADAFVRKLLASLKQV.

Positions 18–83 constitute an HTH luxR-type domain; it reads NIEFPCLLSE…TLWRDVFLRF (66 aa). Positions 42–61 form a DNA-binding region, H-T-H motif; that stretch reads VNEISKRRNRSIKTVSCQKM. One can recognise an EAL domain in the interval 98 to 350; that stretch reads NSSVLPVVSS…AFVRKLLASL (253 aa).

This is an uncharacterized protein from Escherichia coli (strain K12).